The sequence spans 108 residues: MEVRTFAFLQIVVFVALGIQLFAAVTDAADADDEFFTVDYCGMNCTLQQDGSWTPCTQKNAECKCYHESGSSVGLCLSTAYTDFNQFGDPNNSDLDAATPRHPDASSR.

Residues 1-31 form the signal peptide; the sequence is MEVRTFAFLQIVVFVALGIQLFAAVTDAADA. Intrachain disulfides connect Cys-41–Cys-63, Cys-45–Cys-65, and Cys-56–Cys-76. A glycan (N-linked (GlcNAc...) asparagine) is linked at Asn-44. The interval 88-108 is disordered; sequence GDPNNSDLDAATPRHPDASSR. A glycan (N-linked (GlcNAc...) asparagine) is linked at Asn-91. The segment covering 99 to 108 has biased composition (basic and acidic residues); sequence TPRHPDASSR.

The protein resides in the secreted. Its function is as follows. Salivary chemokine-binding protein which binds to host chemokines CXCL1 and CXCL8. This is Evasin P1229 from Ixodes ricinus (Common tick).